Reading from the N-terminus, the 44-residue chain is Thrombin-like enzyme F202 (44 aa).

One can recognise a Peptidase S1 domain in the interval 1–44 (VVGGDECNINEHRFLVALYANSSLLCGGTLINQEWVLIAAHCDR). An intrachain disulfide couples cysteine 26 to cysteine 42. Histidine 41 functions as the Charge relay system in the catalytic mechanism.

Belongs to the peptidase S1 family. Snake venom subfamily. In terms of assembly, monomer. Post-translationally, contains 6 disulfide bonds. As to expression, expressed by the venom gland.

It is found in the secreted. Enzyme activity is markedly inhibited by TLCK and PMSF, and moderately by SBTi. Platelet aggregating activity is strongly inhibited by TLCK. In terms of biological role, thrombin-like snake venom serine protease that coagulates fibrinogen by inducing a fast degradation of the alpha chain (FGA) from human citrated plasma, and a slow degradation of beta chain (FGB). Potently induces platelet aggregation in both platelet rich plasma and washed platelet preparations in a concentration-dependent fashion. Shows amidolytic activities. The polypeptide is Thrombin-like enzyme F202 (Crotalus durissus cascavella (Northeastern Brazilian rattlesnake)).